A 360-amino-acid chain; its full sequence is G-protein coupled receptor 183 (360 aa).

Residues 1–30 are Extracellular-facing; the sequence is MDIKMDNFTTPSAASLESDCDLYAHHHTAR. N-linked (GlcNAc...) asparagine glycosylation occurs at Asn7. The chain crosses the membrane as a helical span at residues 31–56; it reads ILMPLHYSIVFIIGLVGNLLALIVII. Over 57–76 the chain is Cytoplasmic; it reads QNRKKINSTTLYSTNLVISD. The chain crosses the membrane as a helical span at residues 77–94; sequence ILFTTALPTRIAYYALGF. Residue Arg86 participates in 7alpha,25-dihydroxycholesterol binding. Residues 95 to 104 lie on the Extracellular side of the membrane; that stretch reads DWRIGDALCR. A disulfide bridge links Cys103 with Cys180. A helical transmembrane segment spans residues 105–126; that stretch reads ITALVFYINTYAGVNFMTCLSI. 7alpha,25-dihydroxycholesterol is bound by residues Tyr111 and Tyr115. Residues 125-133 form an interaction with G proteins region; the sequence is SIDRFFAVV. Residues 127-148 are Cytoplasmic-facing; that stretch reads DRFFAVVHPLRYNKIKRIEHAK. The chain crosses the membrane as a helical span at residues 149 to 167; that stretch reads CICIFVWILVFGQTLPLLI. Topologically, residues 168–191 are extracellular; that stretch reads NPMSKQEAERTTCMEYPNFEETKS. The chain crosses the membrane as a helical span at residues 192–214; the sequence is LPWILLGACFIGYVLPLVIILIC. Over 215 to 240 the chain is Cytoplasmic; sequence YSQICCKLFKTAKQNPLTEKSGVNKK. The helical transmembrane segment at 241–264 threads the bilayer; the sequence is ALNTIIFIIVVFVVCFTPYHVAII. Tyr259 contacts 7alpha,25-dihydroxycholesterol. The Extracellular segment spans residues 265-286; sequence QHMIKKLRLPGLLECSQRHSFQ. A helical transmembrane segment spans residues 287 to 311; that stretch reads ISLHFTVCLMNFNCCMDPFIYFFAC. At 312–360 the chain is on the cytoplasmic side; the sequence is KGYKRKVMKMLKRQVSVSISSAVRSAPEENSREMTETQMMIHSKSLNGK. At Ser327 the chain carries Phosphoserine. The segment at 339–360 is disordered; sequence EENSREMTETQMMIHSKSLNGK. The span at 347-360 shows a compositional bias: polar residues; sequence ETQMMIHSKSLNGK.

It belongs to the G-protein coupled receptor 1 family. Homodimer and heterodimer. Heterodimerizes with CXCR5; leading to modulate the interaction between of CXCL13 and CXCR5.

The protein localises to the cell membrane. G-protein coupled receptor expressed in lymphocytes that acts as a chemotactic receptor for B-cells, T-cells, splenic dendritic cells, monocytes/macrophages and astrocytes. Receptor for oxysterol 7-alpha,25-dihydroxycholesterol (7-alpha,25-OHC) and other related oxysterols. Mediates cell positioning and movement of a number of cells by binding the 7-alpha,25-OHC ligand that forms a chemotactic gradient. Binding of 7-alpha,25-OHC mediates the correct localization of B-cells during humoral immune responses. Guides B-cell movement along the B-cell zone-T-cell zone boundary and later to interfollicular and outer follicular regions. Its specific expression during B-cell maturation helps position B-cells appropriately for mounting T-dependent antibody responses. Collaborates with CXCR5 to mediate B-cell migration; probably by forming a heterodimer with CXCR5 that affects the interaction between of CXCL13 and CXCR5. Also acts as a chemotactic receptor for some T-cells upon binding to 7-alpha,25-OHC ligand. Promotes follicular helper T (Tfh) cells differentiation by positioning activated T-cells at the follicle-T-zone interface, promoting contact of newly activated CD4 T-cells with activated dendritic cells and exposing them to Tfh-cell-promoting inducible costimulator (ICOS) ligand. Expression in splenic dendritic cells is required for their homeostasis, localization and ability to induce B- and T-cell responses: GPR183 acts as a chemotactic receptor in dendritic cells that mediates the accumulation of CD4(+) dendritic cells in bridging channels. Regulates migration of astrocytes and is involved in communication between astrocytes and macrophages. Promotes osteoclast precursor migration to bone surfaces. Signals constitutively through G(i)-alpha, but not G(s)-alpha or G(q)-alpha. Signals constitutively also via MAPK1/3 (ERK1/2). In Bos taurus (Bovine), this protein is G-protein coupled receptor 183 (GPR183).